A 100-amino-acid chain; its full sequence is Sec-independent protein translocase protein TatA (100 aa).

Residues 1–21 (MGALKPWHIAVLVVVLILLFG) traverse the membrane as a helical segment. A compositionally biased stretch (basic and acidic residues) spans 44–55 (KSLHDDDRDLAE). The tract at residues 44-100 (KSLHDDDRDLAEKANAQAGYQPLPPQVQQEPYPQQTPYQAPPQQQPVVDPVQRARDS) is disordered. The segment covering 69–81 (QVQQEPYPQQTPY) has biased composition (low complexity).

This sequence belongs to the TatA/E family. As to quaternary structure, the Tat system comprises two distinct complexes: a TatABC complex, containing multiple copies of TatA, TatB and TatC subunits, and a separate TatA complex, containing only TatA subunits. Substrates initially bind to the TatABC complex, which probably triggers association of the separate TatA complex to form the active translocon.

Its subcellular location is the cell membrane. Functionally, part of the twin-arginine translocation (Tat) system that transports large folded proteins containing a characteristic twin-arginine motif in their signal peptide across membranes. TatA could form the protein-conducting channel of the Tat system. This Salinispora arenicola (strain CNS-205) protein is Sec-independent protein translocase protein TatA.